We begin with the raw amino-acid sequence, 209 residues long: Redox-sensing transcriptional repressor Rex (209 aa).

The H-T-H motif DNA-binding region spans 16-55 (LYYRFIQNLSLSGKQRVSSAELSEAVKVDSATIRRDFSYF). Position 90–95 (90–95 (GVGNLG)) interacts with NAD(+).

It belongs to the transcriptional regulatory Rex family. Homodimer.

The protein localises to the cytoplasm. In terms of biological role, modulates transcription in response to changes in cellular NADH/NAD(+) redox state. The protein is Redox-sensing transcriptional repressor Rex of Bacillus cereus (strain ATCC 10987 / NRS 248).